Reading from the N-terminus, the 342-residue chain is MKSLVLLLLVAVTVSSVVSKPLPEDSEAEVHKEFETWKVKYGKSYPSTEEEAKRKEMWLATRKRVMEHNTRAGNGLESYTMAVNHFADLTTEEVPKGLLPMPRPEEEEVDKEFEMWKTVNGKTYNSTEEEARRKEIWLATRARVMEHNKRAENGSESFTMGINYFSDMTFEEVPKGRLMVVFPTRDGGEEAEVDKEFEMWKVQHGKSYGSTEEEAKRKEIWLATRTRVMEHNKRAETGLESFTMGMNHLSDKTTAEVTGQRLQDREEAEVHKEFETWKVKYGKTYPSTEEEAKRKEIWLATRKMVTEHNKRAENGQESFTMAVNHFADLTTEEVPKGLLPME.

Positions 1–19 (MKSLVLLLLVAVTVSSVVS) are cleaved as a signal peptide. An N-linked (GlcNAc) asparagine glycan is attached at N153. T184 carries O-linked (GlcNAc) threonine glycosylation.

N-glycosylated, with sialylated biantennary complex-type glycans. Post-translationally, O-glycosylated, with sialylated oligosaccharides.

It is found in the cytoplasm. It localises to the vacuole. Inhibits papain and ficin (cysteine proteinases) but not trypsin (a serine proteinase). The protein is Cystein proteinase inhibitor protein salarin (salarin) of Salvelinus alpinus (Arctic char).